The primary structure comprises 295 residues: Acetylglutamate kinase (295 aa).

Substrate-binding positions include 66 to 67 (GG), R88, and N193.

The protein belongs to the acetylglutamate kinase family. ArgB subfamily.

The protein resides in the cytoplasm. The catalysed reaction is N-acetyl-L-glutamate + ATP = N-acetyl-L-glutamyl 5-phosphate + ADP. The protein operates within amino-acid biosynthesis; L-arginine biosynthesis; N(2)-acetyl-L-ornithine from L-glutamate: step 2/4. Functionally, catalyzes the ATP-dependent phosphorylation of N-acetyl-L-glutamate. The polypeptide is Acetylglutamate kinase (Sinorhizobium fredii (strain NBRC 101917 / NGR234)).